The following is a 270-amino-acid chain: Protein-ADP-ribose hydrolase (270 aa).

The 195-residue stretch at 73 to 267 (VSVKDCQKTN…LYDTYLQKEN (195 aa)) folds into the Macro domain. ADP-D-ribose is bound by residues Asp-92, Ile-93, and Asn-106. Residues Cys-112, His-117, and Cys-119 each contribute to the Zn(2+) site. ADP-D-ribose is bound by residues Cys-119, Ile-120, Asp-121, Ser-212, Thr-213, Gly-214, Glu-215, and Phe-216.

It belongs to the MacroD-type family. Zn-Macro subfamily. Zn(2+) serves as cofactor.

It catalyses the reaction 4-O-(ADP-D-ribosyl)-L-aspartyl-[protein] + H2O = L-aspartyl-[protein] + ADP-D-ribose + H(+). Functionally, ADP-ribosylhydrolase that specifically reverses the SirTM-mediated mono-ADP-ribosylation at an asparatate residue of GcvH-L, by releasing ADP-ribose from the target protein. May play a role in the regulation of the response to host-induced oxidative stress. The protein is Protein-ADP-ribose hydrolase of Streptococcus pyogenes serotype M18 (strain MGAS8232).